Consider the following 49-residue polypeptide: Small, acid-soluble spore protein O (49 aa).

The tract at residues 1–49 is disordered; sequence MGKRKANHTISGMNAASAQGQGTGYNEEFANEPLTPAERQNNKKRKKNQ. The span at 8–20 shows a compositional bias: polar residues; it reads HTISGMNAASAQG.

It belongs to the SspO family.

The protein localises to the spore core. The sequence is that of Small, acid-soluble spore protein O from Bacillus cereus (strain B4264).